Consider the following 372-residue polypeptide: Putative glutamate--cysteine ligase 2 (372 aa).

Belongs to the glutamate--cysteine ligase type 2 family. YbdK subfamily.

It catalyses the reaction L-cysteine + L-glutamate + ATP = gamma-L-glutamyl-L-cysteine + ADP + phosphate + H(+). ATP-dependent carboxylate-amine ligase which exhibits weak glutamate--cysteine ligase activity. This chain is Putative glutamate--cysteine ligase 2, found in Cupriavidus metallidurans (strain ATCC 43123 / DSM 2839 / NBRC 102507 / CH34) (Ralstonia metallidurans).